Here is a 171-residue protein sequence, read N- to C-terminus: ATP synthase subunit b (171 aa).

A helical transmembrane segment spans residues 10–30 (GLYYGDSIFYAVCFLLLMWII).

The protein belongs to the ATPase B chain family. In terms of assembly, F-type ATPases have 2 components, F(1) - the catalytic core - and F(0) - the membrane proton channel. F(1) has five subunits: alpha(3), beta(3), gamma(1), delta(1), epsilon(1). F(0) has three main subunits: a(1), b(2) and c(10-14). The alpha and beta chains form an alternating ring which encloses part of the gamma chain. F(1) is attached to F(0) by a central stalk formed by the gamma and epsilon chains, while a peripheral stalk is formed by the delta and b chains.

It localises to the cell membrane. Functionally, f(1)F(0) ATP synthase produces ATP from ADP in the presence of a proton or sodium gradient. F-type ATPases consist of two structural domains, F(1) containing the extramembraneous catalytic core and F(0) containing the membrane proton channel, linked together by a central stalk and a peripheral stalk. During catalysis, ATP synthesis in the catalytic domain of F(1) is coupled via a rotary mechanism of the central stalk subunits to proton translocation. Component of the F(0) channel, it forms part of the peripheral stalk, linking F(1) to F(0). The sequence is that of ATP synthase subunit b from Levilactobacillus brevis (strain ATCC 367 / BCRC 12310 / CIP 105137 / JCM 1170 / LMG 11437 / NCIMB 947 / NCTC 947) (Lactobacillus brevis).